Consider the following 180-residue polypeptide: Large ribosomal subunit protein uL5c (180 aa).

It belongs to the universal ribosomal protein uL5 family. In terms of assembly, part of the 50S ribosomal subunit; contacts the 5S rRNA.

Its subcellular location is the plastid. It localises to the chloroplast. Its function is as follows. Binds 5S rRNA, forms part of the central protuberance of the 50S subunit. The polypeptide is Large ribosomal subunit protein uL5c (rpl5) (Tupiella akineta (Green alga)).